The sequence spans 339 residues: Ornithine carbamoyltransferase (339 aa).

Residues 56–59, R107, and 134–137 each bind carbamoyl phosphate; these read STRT and HPTQ. L-ornithine contacts are provided by residues N168, D232, and 236–237; that span reads SM. Residues 274–275 and R320 contribute to the carbamoyl phosphate site; that span reads CL.

The protein belongs to the aspartate/ornithine carbamoyltransferase superfamily. OTCase family.

It localises to the cytoplasm. It catalyses the reaction carbamoyl phosphate + L-ornithine = L-citrulline + phosphate + H(+). The protein operates within amino-acid biosynthesis; L-arginine biosynthesis; L-arginine from L-ornithine and carbamoyl phosphate: step 1/3. Reversibly catalyzes the transfer of the carbamoyl group from carbamoyl phosphate (CP) to the N(epsilon) atom of ornithine (ORN) to produce L-citrulline. In Buchnera aphidicola subsp. Baizongia pistaciae (strain Bp), this protein is Ornithine carbamoyltransferase.